The chain runs to 414 residues: MTKNPKILSIVLAGGEGTRLMPLTRDRAKPAVPFGGVYRLIDFPLSNLVNSGYRQVVVLTQYKSHSLDRHISQVWRFSPLLGSYVSPVPAQQRLGKHWYLGSADAIYQTINIIEDVQPDIVVIVGADHVYRMDFEQMVQQHIESGAEFTVAGIRQPIEESNQFGVIEVDPDHPNMIKNFQEKPPTTTGLPDNPNQILASMGNYVANTKALFEALALDEKAADTKHDMGGDIAPYFASRNEAGVYDFNSNEIPGSTATDHAYWRDVGTIKQFYDAHMDLIAYVPEFNLYNQDWPIYTMSGNLPPAKFVHAGRDRLGHATDSIVSPGVIVSGGEVHHSVLSPNVRIHSWAQIVDSVLFDGVVINRRARVYKAILDKNVVLTENSTVGIDTEHDLARGFTVTPDGITVVPKNTIVDD.

Residues Y99, G164, 181-182 (EK), and S199 contribute to the alpha-D-glucose 1-phosphate site.

This sequence belongs to the bacterial/plant glucose-1-phosphate adenylyltransferase family. As to quaternary structure, homotetramer.

It catalyses the reaction alpha-D-glucose 1-phosphate + ATP + H(+) = ADP-alpha-D-glucose + diphosphate. It participates in glycan biosynthesis; glycogen biosynthesis. Its function is as follows. Involved in the biosynthesis of ADP-glucose, a building block required for the elongation reactions to produce glycogen. Catalyzes the reaction between ATP and alpha-D-glucose 1-phosphate (G1P) to produce pyrophosphate and ADP-Glc. The protein is Glucose-1-phosphate adenylyltransferase of Bifidobacterium longum (strain DJO10A).